The chain runs to 159 residues: Transcription elongation factor A protein-like 1 (159 aa).

The tract at residues methionine 1 to glutamate 99 is disordered. A compositionally biased stretch (basic and acidic residues) spans lysine 17 to leucine 34. A compositionally biased stretch (acidic residues) spans glutamine 37–leucine 54. Over residues serine 64 to glutamate 80 the composition is skewed to basic and acidic residues.

Belongs to the TFS-II family. TFA subfamily.

It is found in the nucleus. Its function is as follows. May be involved in transcriptional regulation. Modulates various viral and cellular promoters in a promoter context-dependent manner. Does not bind DNA directly. The polypeptide is Transcription elongation factor A protein-like 1 (Ateles geoffroyi (Black-handed spider monkey)).